Here is a 792-residue protein sequence, read N- to C-terminus: Xaa-Pro dipeptidyl-peptidase (792 aa).

Catalysis depends on charge relay system residues serine 363, aspartate 482, and histidine 513.

It belongs to the peptidase S15 family. Homodimer.

Its subcellular location is the cytoplasm. The catalysed reaction is Hydrolyzes Xaa-Pro-|- bonds to release unblocked, N-terminal dipeptides from substrates including Ala-Pro-|-p-nitroanilide and (sequentially) Tyr-Pro-|-Phe-Pro-|-Gly-Pro-|-Ile.. Removes N-terminal dipeptides sequentially from polypeptides having unsubstituted N-termini provided that the penultimate residue is proline. The protein is Xaa-Pro dipeptidyl-peptidase of Lactobacillus delbrueckii subsp. bulgaricus (strain ATCC BAA-365 / Lb-18).